The chain runs to 390 residues: Putative transposase y4qE (390 aa).

It belongs to the transposase IS1111A/IS1328/IS1533 family.

The polypeptide is Putative transposase y4qE (Sinorhizobium fredii (strain NBRC 101917 / NGR234)).